A 420-amino-acid polypeptide reads, in one-letter code: Reticulon-4 receptor-like 2 (420 aa).

A signal peptide spans 1–46 (MLPGLRRLLQAPASACLLLMLLALPLAAPSCPMLCTCYSSPPTVSC). 2 disulfides stabilise this stretch: Cys31-Cys37 and Cys35-Cys46. One can recognise an LRRNT domain in the interval 47-60 (QANNFSSVPLSLPP). The N-linked (GlcNAc...) asparagine glycan is linked to Asn50. 8 LRR repeats span residues 61-82 (STQR…TFGS), 83-104 (NLLT…TFRH), 107-129 (ALEE…TFQG), 132-153 (RLQS…IFRG), 156-177 (SLQY…LFAD), 180-201 (NLSH…VFRG), 204-225 (SLDR…AFRG), and 228-249 (RLTI…ALAD). A glycan (N-linked (GlcNAc...) asparagine) is linked at Asn93. A glycan (N-linked (GlcNAc...) asparagine) is linked at Asn236. In terms of domain architecture, LRRCT spans 261 to 312 (NPWACDCRARPLWAWFQRARVSSSDVTCATPPERQGRDLRALREADFQACPP). Intrachain disulfides connect Cys265–Cys288 and Cys267–Cys310. The tract at residues 308–399 (QACPPAAPTR…CQAPPDSRGP (92 aa)) is disordered. The segment at 315–327 (PTRPGSRARGNSS) is important for interaction with MAG. The span at 351–360 (LPAEDSRGRQ) shows a compositional bias: basic and acidic residues. Residue Cys390 is the site of GPI-anchor amidated cysteine attachment. Residues 391-420 (QAPPDSRGPALSAGLPSPLLCLLLLVPHHL) constitute a propeptide, removed in mature form.

The protein belongs to the Nogo receptor family. Interaction with MAG is controversial, and may be indirect. Does not interact with MAG, OMG and RTN4. Interacts with MAG. Post-translationally, undergoes zinc metalloproteinase-mediated ectodomain shedding in neuroblastoma cells; is released both as a full-length ectodomain and an N-terminal fragment containing the leucine-rich repeat (LRR) region of the protein. In terms of processing, N-glycosylated. Highly expressed in brain and liver. Expressed at lower levels in kidney, mammary gland, placenta, skeletal muscle, spleen and thyroid.

Its subcellular location is the cell membrane. It is found in the membrane raft. It localises to the cell projection. The protein localises to the dendrite. The protein resides in the perikaryon. Its subcellular location is the axon. In terms of biological role, cell surface receptor that plays a functionally redundant role in the inhibition of neurite outgrowth mediated by MAG. Plays a functionally redundant role in postnatal brain development. Contributes to normal axon migration across the brain midline and normal formation of the corpus callosum. Does not seem to play a significant role in regulating axon regeneration in the adult central nervous system. Protects motoneurons against apoptosis; protection against apoptosis is probably mediated by MAG. Like other family members, plays a role in restricting the number dendritic spines and the number of synapses that are formed during brain development. Signaling mediates activation of Rho and downstream reorganization of the actin cytoskeleton. The chain is Reticulon-4 receptor-like 2 from Homo sapiens (Human).